Consider the following 95-residue polypeptide: Small ribosomal subunit protein bS6 (95 aa).

The protein belongs to the bacterial ribosomal protein bS6 family.

Its function is as follows. Binds together with bS18 to 16S ribosomal RNA. This Acholeplasma laidlawii (strain PG-8A) protein is Small ribosomal subunit protein bS6.